We begin with the raw amino-acid sequence, 170 residues long: MIIERLVGNLRDLNPLDFNVDYVDLEWFETRKKIARFKTRQGKDIAIRLKDAPKLGLSQGDILFKEEKEIIAVNILDSEVIHIQAKSVAEVAKICYEIGNRHAALYYGESQFEFKTPFEKPTLALLEKLGVQNRVLSSKLDSKERLTVSMPHSEPNFKVSLASDFKVVMK.

The protein belongs to the UreE family.

The protein localises to the cytoplasm. In terms of biological role, involved in urease metallocenter assembly. Binds nickel. Probably functions as a nickel donor during metallocenter assembly. This Helicobacter pylori (strain P12) protein is Urease accessory protein UreE.